Reading from the N-terminus, the 157-residue chain is S-ribosylhomocysteine lyase (157 aa).

The Fe cation site is built by His-54, His-58, and Cys-126.

It belongs to the LuxS family. As to quaternary structure, homodimer. Fe cation is required as a cofactor.

The enzyme catalyses S-(5-deoxy-D-ribos-5-yl)-L-homocysteine = (S)-4,5-dihydroxypentane-2,3-dione + L-homocysteine. In terms of biological role, involved in the synthesis of autoinducer 2 (AI-2) which is secreted by bacteria and is used to communicate both the cell density and the metabolic potential of the environment. The regulation of gene expression in response to changes in cell density is called quorum sensing. Catalyzes the transformation of S-ribosylhomocysteine (RHC) to homocysteine (HC) and 4,5-dihydroxy-2,3-pentadione (DPD). In Bacillus anthracis (strain A0248), this protein is S-ribosylhomocysteine lyase.